We begin with the raw amino-acid sequence, 325 residues long: Lactonase drp35 (325 aa).

Positions 46, 108, 110, 128, 131, 133, 136, 183, 234, and 235 each coordinate Ca(2+). The active-site Proton donor is the Asp-234.

It belongs to the SMP-30/CGR1 family. Requires Ca(2+) as cofactor.

Its subcellular location is the cytoplasm. Its function is as follows. Exhibits lactonase activity. Acts in cells with perturbed membrane integrity and is possibly related to the membrane homeostasis. This chain is Lactonase drp35 (drp35), found in Staphylococcus epidermidis (strain ATCC 12228 / FDA PCI 1200).